The sequence spans 330 residues: MKKTFILQQQEISFVKNTFTQNLIEQLGIIEVQGPILSQVGNGMQDNLSGIEKAVQVNVKCIPNAVFEVVHSLAKWKRHTLARFNFKEDEGLFVHMKALRPDEDSLDPTHSVYVDQWDWEKVIPEGRRNFAYLKETVNSIYRAIRLTELAVEARFDIPSILPKQITFVHSEDLVKRYPDLSSKERENAICKEYGAVFLIGIGGKLSDGKPHDGRAPDYDDWTTESENGYKGLNGDILVWNDQLGKAFELSSMGIRVDQSALRLQAGLTGDEDRLKMDWHQDLLNGKLPLTIGGGIGQSRLAMLLLRKKHIGEVQSSVWPKEMLEEFSNIL.

It belongs to the class-II aminoacyl-tRNA synthetase family. AsnA subfamily.

It is found in the cytoplasm. It catalyses the reaction L-aspartate + NH4(+) + ATP = L-asparagine + AMP + diphosphate + H(+). It functions in the pathway amino-acid biosynthesis; L-asparagine biosynthesis; L-asparagine from L-aspartate (ammonia route): step 1/1. The chain is Aspartate--ammonia ligase from Haemophilus influenzae (strain PittEE).